A 253-amino-acid chain; its full sequence is Major prion protein (253 aa).

The signal sequence occupies residues 1 to 22 (MANLGCWMLVLFVATWSDLGLC). The segment at 23–38 (KKRPKPGGWNTGGSRY) is interaction with ADGRG6. The interaction with GRB2, ERI3 and SYN1 stretch occupies residues 23 to 230 (KKRPKPGGWN…ESQAYYQRGS (208 aa)). The disordered stretch occupies residues 26–108 (PKPGGWNTGG…WNKPSKPKTN (83 aa)). Repeat copies occupy residues 51-59 (PQGGGGWGQ), 60-67 (PHGGGWGQ), 68-75 (PHGGGWGQ), 76-83 (PHGGGWGQ), and 84-91 (PHGGGWGQ). Residues 51–91 (PQGGGGWGQPHGGGWGQPHGGGWGQPHGGGWGQPHGGGWGQ) are 5 X 8 AA tandem repeats of P-H-G-G-G-W-G-Q. Residues 52–95 (QGGGGWGQPHGGGWGQPHGGGWGQPHGGGWGQPHGGGWGQGGGT) are compositionally biased toward gly residues. Positions 61, 62, 63, 69, 70, 71, 77, 78, 79, 85, 86, and 87 each coordinate Cu(2+). Cys-179 and Cys-214 form a disulfide bridge. Asn-181 and Asn-197 each carry an N-linked (GlcNAc...) asparagine glycan. The GPI-anchor amidated serine moiety is linked to residue Ser-230. Positions 231 to 253 (SMVLFSSPPVILLISFLIFLIVG) are cleaved as a propeptide — removed in mature form.

It belongs to the prion family. As to quaternary structure, monomer and homodimer. Has a tendency to aggregate into amyloid fibrils containing a cross-beta spine, formed by a steric zipper of superposed beta-strands. Soluble oligomers may represent an intermediate stage on the path to fibril formation. Copper binding may promote oligomerization. Interacts with GRB2, APP, ERI3/PRNPIP and SYN1. Mislocalized cytosolically exposed PrP interacts with MGRN1; this interaction alters MGRN1 subcellular location and causes lysosomal enlargement. Interacts with APP. Interacts with KIAA1191. Interacts with ADGRG6.

The protein resides in the cell membrane. The protein localises to the golgi apparatus. Its function is as follows. Its primary physiological function is unclear. May play a role in neuronal development and synaptic plasticity. May be required for neuronal myelin sheath maintenance. May promote myelin homeostasis through acting as an agonist for ADGRG6 receptor. May play a role in iron uptake and iron homeostasis. Soluble oligomers are toxic to cultured neuroblastoma cells and induce apoptosis (in vitro). Association with GPC1 (via its heparan sulfate chains) targets PRNP to lipid rafts. Also provides Cu(2+) or Zn(2+) for the ascorbate-mediated GPC1 deaminase degradation of its heparan sulfate side chains. In Gorilla gorilla gorilla (Western lowland gorilla), this protein is Major prion protein (PRNP).